The following is a 318-amino-acid chain: Pantothenate kinase (318 aa).

Residue 96 to 103 (GSVAVGKS) coordinates ATP.

This sequence belongs to the prokaryotic pantothenate kinase family.

The protein localises to the cytoplasm. It catalyses the reaction (R)-pantothenate + ATP = (R)-4'-phosphopantothenate + ADP + H(+). It participates in cofactor biosynthesis; coenzyme A biosynthesis; CoA from (R)-pantothenate: step 1/5. This is Pantothenate kinase from Coxiella burnetii (strain Dugway 5J108-111).